Consider the following 153-residue polypeptide: Mitochondrial fission 1 protein (153 aa).

Over 1 to 124 the chain is Cytoplasmic; it reads MTQLPYAVDA…LIDDKVTKEG (124 aa). Residues 73-106 form a TPR repeat; that stretch reads RECLYYLALGNYKLGNYAQARKYNDALLENEPAN. A helical transmembrane segment spans residues 125 to 145; the sequence is LMGVAIISGVAVAAGVIGGVL. Topologically, residues 146-153 are mitochondrial intermembrane; the sequence is LRNLGRKR.

This sequence belongs to the FIS1 family.

Its subcellular location is the mitochondrion outer membrane. Its function is as follows. Has a role in mitochondrial fission. Has a role in outer membrane fission but not matrix separation. This chain is Mitochondrial fission 1 protein (mtp-2), found in Neurospora crassa (strain ATCC 24698 / 74-OR23-1A / CBS 708.71 / DSM 1257 / FGSC 987).